Reading from the N-terminus, the 681-residue chain is Sterile alpha motif domain-containing protein 11 (681 aa).

4 disordered regions span residues 41 to 77 (RNLK…EDGP), 212 to 234 (YHLG…HLPS), 251 to 307 (GPSG…APHV), and 407 to 498 (LLAL…GAEG). Lys72 is covalently cross-linked (Glycyl lysine isopeptide (Lys-Gly) (interchain with G-Cter in SUMO2)). The span at 219 to 234 (HGEDPPWHDPPHHLPS) shows a compositional bias: basic and acidic residues. The segment covering 412–423 (PQGPPGSGPPTP) has biased composition (pro residues). Phosphothreonine is present on Thr485. Residues 543-608 (WTVDDVCSFV…AQVARRLGRV (66 aa)) form the SAM domain. Residues 625–681 (LRAPERELGTGEQPLSPTTATSPYGGGHALAGQTSPKQENGTLALLPGAPDPSQPLC) form a disordered region. Composition is skewed to polar residues over residues 637 to 646 (QPLSPTTATS) and 656 to 665 (GQTSPKQENG). Ser640 bears the Phosphoserine mark.

As to quaternary structure, self-associates. Component of a Polycomb group (PcG) multiprotein PRC1-like complex. Interacts with SAMD7 and PHC2. Expressed in the outer and inner nuclear layers, ganglion cell layer and rod photoreceptors of the retina (at protein level). Widely expressed, showing the highest expression in kidney, prostate and retina.

The protein resides in the nucleus. In terms of biological role, component of a Polycomb group (PcG) multiprotein PRC1-like complex, essential for establishing rod photoreceptor cell identity and function by silencing nonrod gene expression in developing rod photoreceptor cells. This Homo sapiens (Human) protein is Sterile alpha motif domain-containing protein 11 (SAMD11).